We begin with the raw amino-acid sequence, 86 residues long: Large ribosomal subunit protein bL27 (86 aa).

Over residues 1 to 10 (MAQKKGGGST) the composition is skewed to gly residues. Positions 1 to 20 (MAQKKGGGSTRNGRDSESKR) are disordered.

This sequence belongs to the bacterial ribosomal protein bL27 family.

This chain is Large ribosomal subunit protein bL27, found in Polynucleobacter necessarius subsp. necessarius (strain STIR1).